The chain runs to 458 residues: Bifunctional protein GlmU (458 aa).

Residues 1–228 are pyrophosphorylase; that stretch reads MHPKLDILIL…DWEVLGVNSK (228 aa). Residues 10-13, Lys24, Gln75, 80-81, 102-104, Gly139, Glu153, Asn168, and Asn226 contribute to the UDP-N-acetyl-alpha-D-glucosamine site; these read LAAG, GT, and YGD. Asp104 contacts Mg(2+). A Mg(2+)-binding site is contributed by Asn226. The tract at residues 229–249 is linker; the sequence is AQLAELERIHQNEVAQRLLAD. The interval 250–458 is N-acetyltransferase; that stretch reads GVTLMDPARL…KRPIKPKKEG (209 aa). UDP-N-acetyl-alpha-D-glucosamine is bound by residues Arg332 and Lys350. Catalysis depends on His362, which acts as the Proton acceptor. UDP-N-acetyl-alpha-D-glucosamine contacts are provided by Tyr365 and Asn376. Acetyl-CoA is bound by residues Ala379, 385-386, Ser404, Ala422, and Arg439; that span reads NY.

In the N-terminal section; belongs to the N-acetylglucosamine-1-phosphate uridyltransferase family. The protein in the C-terminal section; belongs to the transferase hexapeptide repeat family. As to quaternary structure, homotrimer. The cofactor is Mg(2+).

The protein localises to the cytoplasm. The catalysed reaction is alpha-D-glucosamine 1-phosphate + acetyl-CoA = N-acetyl-alpha-D-glucosamine 1-phosphate + CoA + H(+). The enzyme catalyses N-acetyl-alpha-D-glucosamine 1-phosphate + UTP + H(+) = UDP-N-acetyl-alpha-D-glucosamine + diphosphate. It participates in nucleotide-sugar biosynthesis; UDP-N-acetyl-alpha-D-glucosamine biosynthesis; N-acetyl-alpha-D-glucosamine 1-phosphate from alpha-D-glucosamine 6-phosphate (route II): step 2/2. The protein operates within nucleotide-sugar biosynthesis; UDP-N-acetyl-alpha-D-glucosamine biosynthesis; UDP-N-acetyl-alpha-D-glucosamine from N-acetyl-alpha-D-glucosamine 1-phosphate: step 1/1. Its pathway is bacterial outer membrane biogenesis; LPS lipid A biosynthesis. Catalyzes the last two sequential reactions in the de novo biosynthetic pathway for UDP-N-acetylglucosamine (UDP-GlcNAc). The C-terminal domain catalyzes the transfer of acetyl group from acetyl coenzyme A to glucosamine-1-phosphate (GlcN-1-P) to produce N-acetylglucosamine-1-phosphate (GlcNAc-1-P), which is converted into UDP-GlcNAc by the transfer of uridine 5-monophosphate (from uridine 5-triphosphate), a reaction catalyzed by the N-terminal domain. In Thiobacillus denitrificans (strain ATCC 25259 / T1), this protein is Bifunctional protein GlmU.